We begin with the raw amino-acid sequence, 214 residues long: Chaperone protein TorD (214 aa).

It belongs to the TorD/DmsD family. TorD subfamily.

The protein localises to the cytoplasm. Its function is as follows. Involved in the biogenesis of TorA. Acts on TorA before the insertion of the molybdenum cofactor and, as a result, probably favors a conformation of the apoenzyme that is competent for acquiring the cofactor. The protein is Chaperone protein TorD of Aeromonas salmonicida (strain A449).